The following is a 434-amino-acid chain: Innexin-14 (434 aa).

4 helical membrane passes run 30–50 (LFTV…QHFG), 106–126 (WVPF…WCWA), 301–321 (IFIG…IGTV), and 365–385 (YLCA…GFLK).

Belongs to the pannexin family.

The protein resides in the cell membrane. Its subcellular location is the cell junction. It localises to the gap junction. In terms of biological role, structural component of the gap junctions. This Caenorhabditis elegans protein is Innexin-14 (inx-14).